A 510-amino-acid polypeptide reads, in one-letter code: 2,3-bisphosphoglycerate-independent phosphoglycerate mutase (510 aa).

Mn(2+)-binding residues include Asp-12 and Ser-62. The active-site Phosphoserine intermediate is the Ser-62. Substrate contacts are provided by residues His-123, 153–154, Arg-185, Arg-191, 261–264, and Lys-336; these read RD and RPDR. 5 residues coordinate Mn(2+): Asp-403, His-407, Asp-444, His-445, and His-462.

It belongs to the BPG-independent phosphoglycerate mutase family. As to quaternary structure, monomer. The cofactor is Mn(2+).

The catalysed reaction is (2R)-2-phosphoglycerate = (2R)-3-phosphoglycerate. It participates in carbohydrate degradation; glycolysis; pyruvate from D-glyceraldehyde 3-phosphate: step 3/5. Its function is as follows. Essential for rapid growth and for sporulation. Catalyzes the interconversion of 2-phosphoglycerate and 3-phosphoglycerate. In Priestia megaterium (strain DSM 319 / IMG 1521) (Bacillus megaterium), this protein is 2,3-bisphosphoglycerate-independent phosphoglycerate mutase.